A 361-amino-acid polypeptide reads, in one-letter code: Chorismate synthase (361 aa).

The NADP(+) site is built by Arg48 and Arg54. FMN contacts are provided by residues 125 to 127 (RSS), 238 to 239 (NA), Gly278, 293 to 297 (KPTSS), and Arg319.

The protein belongs to the chorismate synthase family. Homotetramer. Requires FMNH2 as cofactor.

The catalysed reaction is 5-O-(1-carboxyvinyl)-3-phosphoshikimate = chorismate + phosphate. The protein operates within metabolic intermediate biosynthesis; chorismate biosynthesis; chorismate from D-erythrose 4-phosphate and phosphoenolpyruvate: step 7/7. Catalyzes the anti-1,4-elimination of the C-3 phosphate and the C-6 proR hydrogen from 5-enolpyruvylshikimate-3-phosphate (EPSP) to yield chorismate, which is the branch point compound that serves as the starting substrate for the three terminal pathways of aromatic amino acid biosynthesis. This reaction introduces a second double bond into the aromatic ring system. This is Chorismate synthase from Escherichia coli O157:H7.